A 1345-amino-acid chain; its full sequence is DNA-directed RNA polymerase subunit beta' (1345 aa).

Zn(2+) is bound by residues Cys-60, Cys-62, Cys-75, and Cys-78. Mg(2+)-binding residues include Asp-536, Asp-538, and Asp-540. 4 residues coordinate Zn(2+): Cys-895, Cys-974, Cys-981, and Cys-984. Residues Asp-1325 to Lys-1345 are disordered. Positions Asp-1335–Lys-1345 are enriched in basic and acidic residues.

This sequence belongs to the RNA polymerase beta' chain family. As to quaternary structure, the RNAP catalytic core consists of 2 alpha, 1 beta, 1 beta' and 1 omega subunit. When a sigma factor is associated with the core the holoenzyme is formed, which can initiate transcription. The cofactor is Mg(2+). Zn(2+) is required as a cofactor.

It catalyses the reaction RNA(n) + a ribonucleoside 5'-triphosphate = RNA(n+1) + diphosphate. Functionally, DNA-dependent RNA polymerase catalyzes the transcription of DNA into RNA using the four ribonucleoside triphosphates as substrates. The chain is DNA-directed RNA polymerase subunit beta' from Bifidobacterium animalis subsp. lactis (strain AD011).